The primary structure comprises 61 residues: Small ribosomal subunit protein uS14B (61 aa).

The Zn(2+) site is built by Cys-24, Cys-27, Cys-40, and Cys-43.

Belongs to the universal ribosomal protein uS14 family. Zinc-binding uS14 subfamily. Part of the 30S ribosomal subunit. Contacts proteins S3 and S10. Zn(2+) serves as cofactor.

Binds 16S rRNA, required for the assembly of 30S particles and may also be responsible for determining the conformation of the 16S rRNA at the A site. The protein is Small ribosomal subunit protein uS14B of Mycobacterium ulcerans (strain Agy99).